The following is a 210-amino-acid chain: Probable septum site-determining protein MinC (210 aa).

This sequence belongs to the MinC family. In terms of assembly, interacts with MinD and FtsZ.

Functionally, cell division inhibitor that blocks the formation of polar Z ring septums. Rapidly oscillates between the poles of the cell to destabilize FtsZ filaments that have formed before they mature into polar Z rings. Prevents FtsZ polymerization. This is Probable septum site-determining protein MinC from Clostridium novyi (strain NT).